The chain runs to 419 residues: UDP-N-acetylglucosamine 1-carboxyvinyltransferase (419 aa).

22–23 is a phosphoenolpyruvate binding site; it reads KN. R95 contributes to the UDP-N-acetyl-alpha-D-glucosamine binding site. C119 (proton donor) is an active-site residue. Position 119 is a 2-(S-cysteinyl)pyruvic acid O-phosphothioketal (C119). UDP-N-acetyl-alpha-D-glucosamine-binding positions include 164-167, D308, and I330; that span reads KVSV.

Belongs to the EPSP synthase family. MurA subfamily.

The protein localises to the cytoplasm. It catalyses the reaction phosphoenolpyruvate + UDP-N-acetyl-alpha-D-glucosamine = UDP-N-acetyl-3-O-(1-carboxyvinyl)-alpha-D-glucosamine + phosphate. The protein operates within cell wall biogenesis; peptidoglycan biosynthesis. Cell wall formation. Adds enolpyruvyl to UDP-N-acetylglucosamine. The protein is UDP-N-acetylglucosamine 1-carboxyvinyltransferase of Rickettsia conorii (strain ATCC VR-613 / Malish 7).